Consider the following 114-residue polypeptide: Iron-sulfur cluster insertion protein ErpA (114 aa).

Iron-sulfur cluster is bound by residues Cys42, Cys106, and Cys108.

Belongs to the HesB/IscA family. Homodimer. Iron-sulfur cluster is required as a cofactor.

In terms of biological role, required for insertion of 4Fe-4S clusters for at least IspG. This Serratia proteamaculans (strain 568) protein is Iron-sulfur cluster insertion protein ErpA.